Here is an 895-residue protein sequence, read N- to C-terminus: Protein translocase subunit SecA (895 aa).

Residues glutamine 90, 108-112 (GEGKS), and aspartate 498 contribute to the ATP site.

This sequence belongs to the SecA family.

It is found in the plastid. It localises to the chloroplast stroma. The protein localises to the chloroplast thylakoid membrane. The catalysed reaction is ATP + H2O + cellular proteinSide 1 = ADP + phosphate + cellular proteinSide 2.. Functionally, has a central role in coupling the hydrolysis of ATP to the transfer of proteins across the thylakoid membrane. This chain is Protein translocase subunit SecA, found in Cyanidium caldarium (Red alga).